The following is a 212-amino-acid chain: Telomere repeats-binding bouquet formation protein 2 (212 aa).

It belongs to the TERB2 family. As to quaternary structure, component of the MAJIN-TERB1-TERB2 complex.

Functionally, meiosis-specific telomere-associated protein involved in meiotic telomere attachment to the nucleus inner membrane, a crucial step for homologous pairing and synapsis. Component of the MAJIN-TERB1-TERB2 complex, which promotes telomere cap exchange by mediating attachment of telomeric DNA to the inner nuclear membrane and replacement of the protective cap of telomeric chromosomes: in early meiosis, the MAJIN-TERB1-TERB2 complex associates with telomeric DNA and the shelterin/telosome complex. During prophase, the complex matures and promotes release of the shelterin/telosome complex from telomeric DNA. This is Telomere repeats-binding bouquet formation protein 2 from Danio rerio (Zebrafish).